Reading from the N-terminus, the 277-residue chain is 4-diphosphocytidyl-2-C-methyl-D-erythritol kinase (277 aa).

The active site involves K9. 91–101 (PMGAGLGGGSS) contributes to the ATP binding site. Residue D133 is part of the active site.

The protein belongs to the GHMP kinase family. IspE subfamily.

It carries out the reaction 4-CDP-2-C-methyl-D-erythritol + ATP = 4-CDP-2-C-methyl-D-erythritol 2-phosphate + ADP + H(+). It participates in isoprenoid biosynthesis; isopentenyl diphosphate biosynthesis via DXP pathway; isopentenyl diphosphate from 1-deoxy-D-xylulose 5-phosphate: step 3/6. Functionally, catalyzes the phosphorylation of the position 2 hydroxy group of 4-diphosphocytidyl-2C-methyl-D-erythritol. This chain is 4-diphosphocytidyl-2-C-methyl-D-erythritol kinase, found in Acinetobacter baumannii (strain AB307-0294).